The following is a 524-amino-acid chain: Caffeate CoA-transferase (524 aa).

The active-site 5-glutamyl coenzyme A thioester intermediate is Glu-323.

Belongs to the 3-oxoacid CoA-transferase family. As to quaternary structure, homodimer.

It catalyses the reaction hydrocaffeoyl-CoA + (E)-caffeate = 3-(3,4-dihydroxyphenyl)propanoate + (E)-caffeoyl-CoA. In terms of biological role, involved in caffeate respiration, which consists in the reduction of the C-C double bond of caffeate. CarA catalyzes an energy-saving CoA loop for caffeate activation in the steady state of caffeate respiration. It catalyzes the formation of caffeyl-CoA from caffeate with hydrocaffeyl-CoA as the CoA donor via a ping-pong mechanism. In addition to caffeate, the enzyme can utilize 4-coumarate or ferulate as CoA acceptor. Neither acetyl-CoA nor butyryl-CoA served as the CoA donor. The polypeptide is Caffeate CoA-transferase (Acetobacterium woodii).